A 206-amino-acid polypeptide reads, in one-letter code: Holliday junction branch migration complex subunit RuvA (206 aa).

Residues 1 to 64 form a domain I region; the sequence is MIAKLTGLLD…EDNIQLFGFA (64 aa). The interval 65–143 is domain II; the sequence is DTEERDWFRL…SFGAPAPAAA (79 aa). Residues 144–154 form a flexible linker region; the sequence is TAGKGGAAPAG. Residues 154 to 206 form a domain III region; that stretch reads GPAGAVADAVSALVNLGYRRVEAFTAVNAVAQRLGPEAGVSDLIRAGLKELSP.

This sequence belongs to the RuvA family. As to quaternary structure, homotetramer. Forms an RuvA(8)-RuvB(12)-Holliday junction (HJ) complex. HJ DNA is sandwiched between 2 RuvA tetramers; dsDNA enters through RuvA and exits via RuvB. An RuvB hexamer assembles on each DNA strand where it exits the tetramer. Each RuvB hexamer is contacted by two RuvA subunits (via domain III) on 2 adjacent RuvB subunits; this complex drives branch migration. In the full resolvosome a probable DNA-RuvA(4)-RuvB(12)-RuvC(2) complex forms which resolves the HJ.

The protein localises to the cytoplasm. The RuvA-RuvB-RuvC complex processes Holliday junction (HJ) DNA during genetic recombination and DNA repair, while the RuvA-RuvB complex plays an important role in the rescue of blocked DNA replication forks via replication fork reversal (RFR). RuvA specifically binds to HJ cruciform DNA, conferring on it an open structure. The RuvB hexamer acts as an ATP-dependent pump, pulling dsDNA into and through the RuvAB complex. HJ branch migration allows RuvC to scan DNA until it finds its consensus sequence, where it cleaves and resolves the cruciform DNA. This chain is Holliday junction branch migration complex subunit RuvA, found in Rhodospirillum centenum (strain ATCC 51521 / SW).